A 544-amino-acid chain; its full sequence is Prolyl 4-hydroxylase subunit alpha-3 (544 aa).

An N-terminal signal peptide occupies residues 1-24 (MGPGARLAALLVLLKLGVGDPAAA). One copy of the TPR repeat lies at 227-260 (EDALDYLAFACYQVGNVSCALSLSREFLVYSPDN). Asparagine 242 carries an N-linked (GlcNAc...) asparagine glycan. One can recognise a Fe2OG dioxygenase domain in the interval 422–529 (YAEYLQVVNY…KWVANKWIHE (108 aa)). Residues histidine 440 and aspartate 442 each coordinate Fe cation. Residue asparagine 482 is glycosylated (N-linked (GlcNAc...) asparagine). Histidine 510 serves as a coordination point for Fe cation. Lysine 520 provides a ligand contact to 2-oxoglutarate.

The protein belongs to the P4HA family. In terms of assembly, heterotetramer of two alpha-3 chains and two beta chains (the beta chain is the multi-functional PDI). It depends on Fe(2+) as a cofactor. L-ascorbate is required as a cofactor. Post-translationally, N-glycosylation plays no role in the catalytic activity.

The protein localises to the endoplasmic reticulum lumen. The enzyme catalyses L-prolyl-[collagen] + 2-oxoglutarate + O2 = trans-4-hydroxy-L-prolyl-[collagen] + succinate + CO2. In terms of biological role, catalyzes the post-translational formation of 4-hydroxyproline in -Xaa-Pro-Gly- sequences in collagens and other proteins. The polypeptide is Prolyl 4-hydroxylase subunit alpha-3 (P4ha3) (Rattus norvegicus (Rat)).